The chain runs to 1006 residues: Retinoblastoma-related protein (1006 aa).

The domain A stretch occupies residues 411-604 (TPVTTAMTTA…EKGSSMYNSL (194 aa)). The tract at residues 411–855 (TPVTTAMTTA…NEIFVPAVKP (445 aa)) is pocket. Positions 605–724 (IVARPALSAE…PGGGGETCAE (120 aa)) are spacer. The interval 725-855 (TAVNVFFSKI…NEIFVPAVKP (131 aa)) is domain B. The span at 866-893 (AQSGSQVPEAKNNTNGVNPSSPRTSSFP) shows a compositional bias: polar residues. The tract at residues 866-898 (AQSGSQVPEAKNNTNGVNPSSPRTSSFPSLPDM) is disordered.

This sequence belongs to the retinoblastoma protein (RB) family.

The protein resides in the nucleus. In terms of biological role, regulator of biological processes that recruits a histone deacetylase to control gene transcription. May play a role in the entry into mitosis, negatively regulating the cell proliferation. Formation of stable complexes with geminiviridae replication-associated proteins may create a cellular environment which favors viral DNA replication. The protein is Retinoblastoma-related protein (RB) of Scutellaria baicalensis (Baical skullcap).